A 470-amino-acid chain; its full sequence is Aldehyde dehydrogenase family 3 comG (470 aa).

Residue 196–201 (GSVKVG) participates in NAD(+) binding. Active-site residues include Glu218 and Cys252.

It belongs to the aldehyde dehydrogenase family.

The protein localises to the cytoplasm. The catalysed reaction is an aldehyde + NADP(+) + H2O = a carboxylate + NADPH + 2 H(+). It catalyses the reaction an aldehyde + NAD(+) + H2O = a carboxylate + NADH + 2 H(+). This is Aldehyde dehydrogenase family 3 comG (comG) from Dictyostelium discoideum (Social amoeba).